Reading from the N-terminus, the 476-residue chain is Endonuclease SceI small subunit (476 aa).

This sequence belongs to the LAGLIDADG endonuclease family. In terms of assembly, endonuclease SceI (Endo.SceI) is a heterodimer of ENS2 and SSC1. Post-translationally, the N-terminus is blocked.

The protein localises to the mitochondrion. Catalytic component of endonuclease SceI (Endo.SceI), which cleaves specifically at multiple sites on mitochondrial DNA and produces double-stranded breaks. The chain is Endonuclease SceI small subunit (ENS2) from Saccharomyces cerevisiae (Baker's yeast).